A 73-amino-acid polypeptide reads, in one-letter code: MKFAFAIFVVLAILHTELISATEYKCKVTGTGDMTIPFGCKDGNDVQGCKKLCQEKCKYTTTRQSCVGKKCYC.

An N-terminal signal peptide occupies residues 1–21 (MKFAFAIFVVLAILHTELISA).

Its subcellular location is the secreted. In terms of biological role, salivary protein that inhibits host voltage-gated potassium channels Kv1.1/KCNA1, Kv1.2/KCNA2 and Kv1.3/KCNA3 likely via a voltage-independent pore-blocking mechanism. Suppresses expression of the Kv1.3/KCNA3 channel in lipopolysaccharide (LPS)-stimulated mouse macrophages and human T-cells. Down-regulates secretion of nitric oxide (NO) and inflammatory cytokines, such as TNF-alpha/TNF, IL-1beta/IL1B and IL6, in LPS-stimulated mouse macrophages in a manner dependent on Kv1.3/KCNA3 channel blockage. Reduces activation of MAPK and NF-kappa-B signaling pathways in LPS-stimulated mouse macrophages. Modulates intracellular Ca(2+) signaling in human PMA/ionomycin-triggered T-cells. Interferes with the activation of the MAPK, NF-kappa-B and NFATc1 pathways in human PMA/ionomycin-triggered T-cells. Reduces proliferation of human PMA/ionomycin-triggered T-cells. Down-regulates secretion of cytokines, such as TNF-alpha/TNF and IL2, in human PMA/ionomycin-triggered T-cells. In Xenopsylla cheopis (Oriental rat flea), this protein is Salivary protein FS48.